The sequence spans 616 residues: Sulfite reductase [NADPH] flavoprotein alpha-component (616 aa).

Residues 80–218 form the Flavodoxin-like domain; that stretch reads LTIIFASQTG…SAAQWRKQAL (139 aa). Residues 86 to 91, 133 to 136, and 169 to 178 contribute to the FMN site; these read SQTGNA, STNG, and LGDSSYEFFC. Positions 251–465 constitute an FAD-binding FR-type domain; that stretch reads QKPYAATLLT…VENNNNFKLP (215 aa). FAD is bound by residues Thr339, Gly373, 403 to 406, 421 to 423, Tyr427, and 436 to 439; these read RLYS, TVG, and GGAS. NADP(+)-binding positions include 536-537, 542-546, and Asp578; these read SR and KVYVQ. Residue Tyr616 coordinates FAD.

It belongs to the NADPH-dependent sulphite reductase flavoprotein subunit CysJ family. This sequence in the N-terminal section; belongs to the flavodoxin family. In the C-terminal section; belongs to the flavoprotein pyridine nucleotide cytochrome reductase family. As to quaternary structure, alpha(8)-beta(8). The alpha component is a flavoprotein, the beta component is a hemoprotein. The cofactor is FAD. It depends on FMN as a cofactor.

It catalyses the reaction hydrogen sulfide + 3 NADP(+) + 3 H2O = sulfite + 3 NADPH + 4 H(+). The protein operates within sulfur metabolism; hydrogen sulfide biosynthesis; hydrogen sulfide from sulfite (NADPH route): step 1/1. Its function is as follows. Component of the sulfite reductase complex that catalyzes the 6-electron reduction of sulfite to sulfide. This is one of several activities required for the biosynthesis of L-cysteine from sulfate. The flavoprotein component catalyzes the electron flow from NADPH -&gt; FAD -&gt; FMN to the hemoprotein component. This is Sulfite reductase [NADPH] flavoprotein alpha-component from Vibrio vulnificus (strain CMCP6).